Reading from the N-terminus, the 395-residue chain is Zinc finger protein 385D (395 aa).

3 Matrin-type zinc fingers span residues isoleucine 80 to alanine 110, leucine 204 to alanine 234, and phenylalanine 267 to glycine 297. A disordered region spans residues leucine 282–asparagine 308.

It is found in the nucleus. This is Zinc finger protein 385D (Znf385d) from Rattus norvegicus (Rat).